A 267-amino-acid chain; its full sequence is Neural/ectodermal development factor IMP-L2 (267 aa).

The N-terminal stretch at 1–25 (MEAKMNLHVCALALLLFGSIATVRG) is a signal peptide. 2 Ig-like C2-type domains span residues 48–149 (PRNR…KTIY) and 174–260 (PRII…TFVY). Cystine bridges form between Cys-80-Cys-139 and Cys-195-Cys-244.

Detected in several sites including the ventral neuroectoderm, the tracheal pits, the pharynx and esophagus, and specific neuronal cell bodies, where it is primarily expressed.

It localises to the secreted. It is found in the extracellular space. In terms of biological role, essential developmental role during embryogenesis, in particular the normal development of the nervous system. May be involved in some aspect of cell adhesion. The protein is Neural/ectodermal development factor IMP-L2 (ImpL2) of Drosophila melanogaster (Fruit fly).